The following is a 242-amino-acid chain: DNA repair protein RecO (242 aa).

The protein belongs to the RecO family. In terms of assembly, monomer.

Functionally, involved in DNA repair and RecF pathway recombination. The protein is DNA repair protein RecO of Salmonella enteritidis PT4 (strain P125109).